Consider the following 326-residue polypeptide: tRNA-modifying protein YgfZ (326 aa).

Residues W27 and W189 each contribute to the folate site.

Belongs to the tRNA-modifying YgfZ family.

The protein localises to the cytoplasm. In terms of biological role, folate-binding protein involved in regulating the level of ATP-DnaA and in the modification of some tRNAs. It is probably a key factor in regulatory networks that act via tRNA modification, such as initiation of chromosomal replication. The protein is tRNA-modifying protein YgfZ of Shigella boydii serotype 18 (strain CDC 3083-94 / BS512).